The following is a 399-amino-acid chain: Tryptophan synthase beta chain (399 aa).

Position 92 is an N6-(pyridoxal phosphate)lysine (Lys-92).

This sequence belongs to the TrpB family. As to quaternary structure, tetramer of two alpha and two beta chains. Pyridoxal 5'-phosphate serves as cofactor.

It carries out the reaction (1S,2R)-1-C-(indol-3-yl)glycerol 3-phosphate + L-serine = D-glyceraldehyde 3-phosphate + L-tryptophan + H2O. It functions in the pathway amino-acid biosynthesis; L-tryptophan biosynthesis; L-tryptophan from chorismate: step 5/5. Functionally, the beta subunit is responsible for the synthesis of L-tryptophan from indole and L-serine. This chain is Tryptophan synthase beta chain, found in Exiguobacterium sibiricum (strain DSM 17290 / CCUG 55495 / CIP 109462 / JCM 13490 / 255-15).